The following is a 153-amino-acid chain: Ribosome maturation factor RimP (153 aa).

The protein belongs to the RimP family.

It is found in the cytoplasm. Functionally, required for maturation of 30S ribosomal subunits. In Marinomonas sp. (strain MWYL1), this protein is Ribosome maturation factor RimP.